Reading from the N-terminus, the 1133-residue chain is Myb-binding protein 1A (1133 aa).

Disordered regions lie at residues 1–62 (MKSK…ENTA), 718–764 (PLSK…DAES), 924–943 (GEEH…SRQA), and 1111–1133 (KKVA…EEST). 2 stretches are compositionally biased toward basic and acidic residues: residues 20–35 (KAKE…KSEA) and 50–60 (EKPAETEEKEN). Composition is skewed to acidic residues over residues 725 to 735 (GEEESDDELDK) and 744 to 762 (DDSE…EDDA).

The protein belongs to the MYBBP1A family. Interacts with nclb.

The protein localises to the cytoplasm. The protein resides in the nucleus. Its subcellular location is the nucleolus. Functionally, has a role in rRNA biogenesis, cell proliferation and tissue growth by contributing to the localization of nclb to the nucleolus. This is Myb-binding protein 1A from Drosophila melanogaster (Fruit fly).